The chain runs to 120 residues: FK506-binding protein 1B (120 aa).

Residues 1–26 are disordered; that stretch reads MGLEKQTLRMGNGKDHPQPGDPVELN. In terms of domain architecture, PPIase FKBP-type spans 20 to 115; sequence GDPVELNYTG…VFEVELLKIK (96 aa).

The protein belongs to the FKBP-type PPIase family. FKBP1 subfamily.

It carries out the reaction [protein]-peptidylproline (omega=180) = [protein]-peptidylproline (omega=0). With respect to regulation, inhibited by both FK506 and rapamycin. Its function is as follows. PPIases accelerate the folding of proteins. It catalyzes the cis-trans isomerization of proline imidic peptide bonds in oligopeptides. In Aspergillus fumigatus (strain ATCC MYA-4609 / CBS 101355 / FGSC A1100 / Af293) (Neosartorya fumigata), this protein is FK506-binding protein 1B (fpr1B).